The following is a 292-amino-acid chain: Diaminopimelate epimerase (292 aa).

3 residues coordinate substrate: Asn13, Gln46, and Asn66. The Proton donor role is filled by Cys75. Residues 76 to 77 (GN), Asn166, Asn199, and 217 to 218 (ER) contribute to the substrate site. The active-site Proton acceptor is the Cys226. Position 227–228 (227–228 (GT)) interacts with substrate.

It belongs to the diaminopimelate epimerase family. In terms of assembly, homodimer.

Its subcellular location is the cytoplasm. It carries out the reaction (2S,6S)-2,6-diaminopimelate = meso-2,6-diaminopimelate. It participates in amino-acid biosynthesis; L-lysine biosynthesis via DAP pathway; DL-2,6-diaminopimelate from LL-2,6-diaminopimelate: step 1/1. Functionally, catalyzes the stereoinversion of LL-2,6-diaminopimelate (L,L-DAP) to meso-diaminopimelate (meso-DAP), a precursor of L-lysine and an essential component of the bacterial peptidoglycan. In Ralstonia nicotianae (strain ATCC BAA-1114 / GMI1000) (Ralstonia solanacearum), this protein is Diaminopimelate epimerase.